We begin with the raw amino-acid sequence, 86 residues long: Anti-adapter protein IraP (86 aa).

The stretch at 1-36 forms a coiled coil; that stretch reads MKNLISELLLRLAQKEEESKELVAQVEALEIIVTAM.

This sequence belongs to the IraP family. Interacts with RssB.

The protein localises to the cytoplasm. In terms of biological role, inhibits RpoS proteolysis by regulating RssB activity, thereby increasing the stability of the sigma stress factor RpoS especially during phosphate starvation, but also in stationary phase and during nitrogen starvation. Its effect on RpoS stability is due to its interaction with RssB, which probably blocks the interaction of RssB with RpoS, and the consequent delivery of the RssB-RpoS complex to the ClpXP protein degradation pathway. The chain is Anti-adapter protein IraP from Citrobacter koseri (strain ATCC BAA-895 / CDC 4225-83 / SGSC4696).